A 433-amino-acid chain; its full sequence is Adenylosuccinate synthetase (433 aa).

GTP-binding positions include 11 to 17 (GDEGKGK) and 39 to 41 (GHT). Asp12 functions as the Proton acceptor in the catalytic mechanism. 2 residues coordinate Mg(2+): Asp12 and Gly39. IMP is bound by residues 12–15 (DEGK), 37–40 (NAGH), Thr134, Arg148, Asn230, Thr245, and Arg309. The active-site Proton donor is the His40. Position 305-311 (305-311 (VTTGRKR)) interacts with substrate. Residues Arg311, 337 to 339 (KLD), and 419 to 421 (GTG) each bind GTP.

It belongs to the adenylosuccinate synthetase family. In terms of assembly, homodimer. Requires Mg(2+) as cofactor.

The protein resides in the cytoplasm. The enzyme catalyses IMP + L-aspartate + GTP = N(6)-(1,2-dicarboxyethyl)-AMP + GDP + phosphate + 2 H(+). Its pathway is purine metabolism; AMP biosynthesis via de novo pathway; AMP from IMP: step 1/2. Its function is as follows. Plays an important role in the de novo pathway and in the salvage pathway of purine nucleotide biosynthesis. Catalyzes the first committed step in the biosynthesis of AMP from IMP. The polypeptide is Adenylosuccinate synthetase (Saccharomyces cerevisiae (strain JAY291) (Baker's yeast)).